The chain runs to 253 residues: UPF0246 protein lhv_1883 (253 aa).

The protein belongs to the UPF0246 family.

This is UPF0246 protein lhv_1883 from Lactobacillus helveticus (strain DPC 4571).